The sequence spans 431 residues: Adenylosuccinate synthetase (431 aa).

Residues 12–18 (GDEGKGK) and 40–42 (GHT) contribute to the GTP site. D13 serves as the catalytic Proton acceptor. Residues D13 and G40 each coordinate Mg(2+). Residues 13–16 (DEGK), 38–41 (NAGH), T128, R142, Q223, T238, and R301 each bind IMP. H41 functions as the Proton donor in the catalytic mechanism. 297–303 (TVTGRPR) provides a ligand contact to substrate. GTP is bound by residues R303, 329 to 331 (SID), and 411 to 413 (SVG).

It belongs to the adenylosuccinate synthetase family. Homodimer. The cofactor is Mg(2+).

The protein localises to the cytoplasm. The catalysed reaction is IMP + L-aspartate + GTP = N(6)-(1,2-dicarboxyethyl)-AMP + GDP + phosphate + 2 H(+). It functions in the pathway purine metabolism; AMP biosynthesis via de novo pathway; AMP from IMP: step 1/2. In terms of biological role, plays an important role in the de novo pathway of purine nucleotide biosynthesis. Catalyzes the first committed step in the biosynthesis of AMP from IMP. The protein is Adenylosuccinate synthetase of Lacticaseibacillus casei (strain BL23) (Lactobacillus casei).